Here is a 319-residue protein sequence, read N- to C-terminus: Ribonuclease Z (319 aa).

7 residues coordinate Zn(2+): H62, H64, D66, H67, H139, D209, and H268. Catalysis depends on D66, which acts as the Proton acceptor.

The protein belongs to the RNase Z family. In terms of assembly, homodimer. Zn(2+) serves as cofactor.

The enzyme catalyses Endonucleolytic cleavage of RNA, removing extra 3' nucleotides from tRNA precursor, generating 3' termini of tRNAs. A 3'-hydroxy group is left at the tRNA terminus and a 5'-phosphoryl group is left at the trailer molecule.. Functionally, zinc phosphodiesterase, which displays some tRNA 3'-processing endonuclease activity. Probably involved in tRNA maturation, by removing a 3'-trailer from precursor tRNA. This is Ribonuclease Z from Pseudomonas putida (strain GB-1).